We begin with the raw amino-acid sequence, 116 residues long: Somatostatin (116 aa).

A signal peptide spans 1 to 24 (MLSCRLQCALAALSIVLALGCVTG). The propeptide occupies 25 to 88 (APSDPRLRQF…QDEMRLELQR (64 aa)). Ala-43 bears the Alanine amide mark. A disordered region spans residues 62-82 (QTENDALEPEDLSQAAEQDEM). Residues Cys-105 and Cys-116 are joined by a disulfide bond.

This sequence belongs to the somatostatin family. C-terminal amidation of the neuronostatin peptide is required for its biological activity, including for the regulation of mean arterial pressure.

The protein localises to the secreted. In terms of biological role, inhibits the secretion of pituitary hormones, including that of growth hormone/somatotropin (GH1), PRL, ACTH, luteinizing hormone (LH) and TSH. Also impairs ghrelin- and GnRH-stimulated secretion of GH1 and LH; the inhibition of ghrelin-stimulated secretion of GH1 can be further increased by neuronostatin. May enhance low-glucose-induced glucagon release by pancreatic alpha cells. This effect may be mediated by binding to GPR107 and PKA activation. May regulate cardiac contractile function. May compromise cardiomyocyte viability. In the central nervous system, may impair memory retention and may affect hippocampal excitability. May also have anxiolytic and anorexigenic effects. May play a role in arterial pressure regulation. May inhibit basal, but not ghrelin- or GnRH-stimulated secretion of GH1 or LH, but does not affect the release of other pituitary hormones, including PRL, ACTH, FSH or TSH. Potentiates inhibitory action of somatostatin on ghrelin-stimulated secretion of GH1, but not that on GnRH-stimulated secretion of LH. The polypeptide is Somatostatin (SST) (Homo sapiens (Human)).